The following is a 267-amino-acid chain: Luciferase (267 aa).

An N-linked (GlcNAc...) asparagine glycan is attached at asparagine 4. Residues 17–39 (LSSRSIAITCGVVLASAIAFPII) traverse the membrane as a helical segment.

It belongs to the fungal luciferase family.

It localises to the membrane. The enzyme catalyses 3-hydroxyhispidin + O2 = (E)-caffeoylpyruvate + hnu + CO2. It carries out the reaction 3-hydroxyhispidin + O2 = 4-[(E)-2-(3,4-dihydroxyphenyl)ethenyl]-1,7-dihydroxy-2,3,5-trioxabicyclo[2.2.2]oct-7-en-6-one. Its function is as follows. Luciferase; part of the gene cluster that mediates the fungal bioluminescence cycle. Uses the fungal luciferin 3-hydroxyhispidin as a substrate to produce an endoperoxide as a high-energy intermediate with decomposition that yields oxyluciferin (also known as caffeoylpyruvate) and light emission. The fungal bioluminescence cycle begins with the hispidin synthetase that catalyzes the formation of hispidin which is further hydroxylated by the hispidin-3-hydroxylase, yielding the fungal luciferin 3-hydroxyhispidin. The luciferase then produces an endoperoxide as a high-energy intermediate with decomposition that yields oxyluciferin and light emission. Oxyluciferin can be recycled to caffeic acid by caffeoylpyruvate hydrolase. The chain is Luciferase from Neonothopanus nambi (Agaricus nambi).